Reading from the N-terminus, the 319-residue chain is ATP-dependent 6-phosphofructokinase (319 aa).

Glycine 11 contributes to the ATP binding site. Arginine 21–arginine 25 contacts ADP. ATP contacts are provided by residues arginine 72–cysteine 73 and glycine 102–serine 105. Aspartate 103 is a binding site for Mg(2+). Position 125–127 (threonine 125–aspartate 127) interacts with substrate. Residue aspartate 127 is the Proton acceptor of the active site. Arginine 154 is a binding site for ADP. Residues arginine 162 and methionine 169–arginine 171 each bind substrate. ADP contacts are provided by residues glycine 185–glutamate 187, arginine 211, and lysine 213–histidine 215. Substrate is bound by residues glutamate 222, arginine 243, and histidine 249–arginine 252.

It belongs to the phosphofructokinase type A (PFKA) family. ATP-dependent PFK group I subfamily. Prokaryotic clade 'B1' sub-subfamily. Homotetramer. Mg(2+) serves as cofactor.

Its subcellular location is the cytoplasm. It carries out the reaction beta-D-fructose 6-phosphate + ATP = beta-D-fructose 1,6-bisphosphate + ADP + H(+). It functions in the pathway carbohydrate degradation; glycolysis; D-glyceraldehyde 3-phosphate and glycerone phosphate from D-glucose: step 3/4. Allosterically activated by ADP and other diphosphonucleosides, and allosterically inhibited by phosphoenolpyruvate. Catalyzes the phosphorylation of D-fructose 6-phosphate to fructose 1,6-bisphosphate by ATP, the first committing step of glycolysis. In Clostridium novyi (strain NT), this protein is ATP-dependent 6-phosphofructokinase.